Reading from the N-terminus, the 466-residue chain is Glutamate decarboxylase alpha (466 aa).

The substrate site is built by threonine 62 and asparagine 83. Pyridoxal 5'-phosphate-binding positions include 126–127, threonine 212, and histidine 275; that span reads SS. Lysine 276 is modified (N6-(pyridoxal phosphate)lysine).

It belongs to the group II decarboxylase family. Homohexamer. Pyridoxal 5'-phosphate serves as cofactor.

The catalysed reaction is L-glutamate + H(+) = 4-aminobutanoate + CO2. Functionally, converts glutamate to gamma-aminobutyrate (GABA), consuming one intracellular proton in the reaction. The gad system helps to maintain a near-neutral intracellular pH when cells are exposed to extremely acidic conditions. The ability to survive transit through the acidic conditions of the stomach is essential for successful colonization of the mammalian host by commensal and pathogenic bacteria. In Shigella flexneri, this protein is Glutamate decarboxylase alpha (gadA).